The primary structure comprises 305 residues: Acetyl-coenzyme A carboxylase carboxyl transferase subunit beta (305 aa).

The 270-residue stretch at 25–294 (VWTKCDSCGQ…PGNDDVEIRS (270 aa)) folds into the CoA carboxyltransferase N-terminal domain. Cys29, Cys32, Cys48, and Cys51 together coordinate Zn(2+). The C4-type zinc-finger motif lies at 29-51 (CDSCGQVLYRAELERNLGVCPKC). Residues 281-305 (NHPEPGNDDVEIRSDAPSESSQDDA) are disordered.

It belongs to the AccD/PCCB family. As to quaternary structure, acetyl-CoA carboxylase is a heterohexamer composed of biotin carboxyl carrier protein (AccB), biotin carboxylase (AccC) and two subunits each of ACCase subunit alpha (AccA) and ACCase subunit beta (AccD). Requires Zn(2+) as cofactor.

Its subcellular location is the cytoplasm. The catalysed reaction is N(6)-carboxybiotinyl-L-lysyl-[protein] + acetyl-CoA = N(6)-biotinyl-L-lysyl-[protein] + malonyl-CoA. It functions in the pathway lipid metabolism; malonyl-CoA biosynthesis; malonyl-CoA from acetyl-CoA: step 1/1. Its function is as follows. Component of the acetyl coenzyme A carboxylase (ACC) complex. Biotin carboxylase (BC) catalyzes the carboxylation of biotin on its carrier protein (BCCP) and then the CO(2) group is transferred by the transcarboxylase to acetyl-CoA to form malonyl-CoA. This is Acetyl-coenzyme A carboxylase carboxyl transferase subunit beta from Pectobacterium atrosepticum (strain SCRI 1043 / ATCC BAA-672) (Erwinia carotovora subsp. atroseptica).